Here is a 969-residue protein sequence, read N- to C-terminus: Endogenous retrovirus group K member 11 Pol protein (969 aa).

Residues 57-245 enclose the Reverse transcriptase domain; it reads LEKGHIEPSF…TPFHYLGMQI (189 aa). Positions 161–164 match the LPQG motif; it reads LPQG. An RNase H type-1 domain is found at 460–590; sequence LENALTVFTD…ADLLVSSALI (131 aa). Mg(2+)-binding residues include Asp469, Glu497, Asp517, and Asp582. The Integrase-type zinc finger occupies 587–628; that stretch reads SALIKAQELHALTHVNAAGLKNKFDVTWKQAKDIVQHCTQCQ. Zn(2+) contacts are provided by His596, His600, Cys624, and Cys627. The 162-residue stretch at 642–803 folds into the Integrase catalytic domain; sequence RGLCPNALWQ…TSAEQHLTGK (162 aa). The segment at residues 811–859 is a DNA-binding region (integrase-type); sequence KLIWWKDNKNKTWEIGKVITWGRGFACVSPGENQLPVWIPTRHLKFYNE.

The protein belongs to the beta type-B retroviral polymerase family. HERV class-II K(HML-2) pol subfamily.

The catalysed reaction is DNA(n) + a 2'-deoxyribonucleoside 5'-triphosphate = DNA(n+1) + diphosphate. The enzyme catalyses Endonucleolytic cleavage to 5'-phosphomonoester.. Functionally, early post-infection, the reverse transcriptase converts the viral RNA genome into double-stranded viral DNA. The RNase H domain of the reverse transcriptase performs two functions. It degrades the RNA template and specifically removes the RNA primer from the RNA/DNA hybrid. Following nuclear import, the integrase catalyzes the insertion of the linear, double-stranded viral DNA into the host cell chromosome. Endogenous Pol proteins may have kept, lost or modified their original function during evolution. This Homo sapiens (Human) protein is Endogenous retrovirus group K member 11 Pol protein (ERVK-11).